Here is a 562-residue protein sequence, read N- to C-terminus: Wee1-like protein kinase 2 (562 aa).

2 disordered regions span residues 1–86 and 161–181; these read MRTA…DKGV and YRQA…DDCS. A compositionally biased stretch (polar residues) spans 35-48; it reads HSNQRGSPVNSWRA. Positions 217-491 constitute a Protein kinase domain; the sequence is FLEIEKIGAG…AKNSLLRRCV (275 aa). Residues 223–231 and Lys246 each bind ATP; that span reads IGAGEFGSV. Residue Asp344 is the Proton acceptor of the active site. Residues Asn349 and Asp381 each coordinate Mg(2+). Positions 494–520 form a coiled coil; sequence AAQLQKQLNVEKFKTAMLERELKAAKL.

The protein belongs to the protein kinase superfamily. Ser/Thr protein kinase family. WEE1 subfamily.

It localises to the nucleus. It carries out the reaction L-tyrosyl-[protein] + ATP = O-phospho-L-tyrosyl-[protein] + ADP + H(+). Functionally, oocyte-specific protein tyrosine kinase that phosphorylates and inhibits cdk1 and acts as a regulator of meiosis. Required to maintain meiotic arrest in oocytes by phosphorylating cdk1 at 'Tyr-15', leading to inhibit cdk1 activity and prevent meiotic reentry. The chain is Wee1-like protein kinase 2 (wee2) from Xenopus tropicalis (Western clawed frog).